The following is a 272-amino-acid chain: SWIRM domain-containing protein laf2 (272 aa).

The disordered stretch occupies residues 86–148 (HVGRWANRHS…RRRKSARGNG (63 aa)). Composition is skewed to low complexity over residues 95 to 120 (SNVS…SYSG) and 127 to 136 (RSISSSPSTI). 2 positions are modified to phosphoserine: Ser-130 and Ser-132. Thr-135 is modified (phosphothreonine). One can recognise an SWIRM domain in the interval 182 to 272 (LKAEWKGPPL…AFHEVGFFDD (91 aa)).

Component of the RPD3C(L) complex.

Its subcellular location is the nucleus. Its function is as follows. Component of the RPD3C(L) histone deacetylase complex (HDAC) responsible for the deacetylation of lysine residues on the N-terminal part of the core histones (H2A, H2B, H3 and H4). Histone deacetylation gives a tag for epigenetic repression and plays an important role in transcriptional regulation, cell cycle progression and developmental events. This chain is SWIRM domain-containing protein laf2 (laf2), found in Schizosaccharomyces pombe (strain 972 / ATCC 24843) (Fission yeast).